A 241-amino-acid chain; its full sequence is Glucosamine-6-phosphate deaminase (241 aa).

The active-site Proton acceptor; for enolization step is the D67. The active-site For ring-opening step is N136. The active-site Proton acceptor; for ring-opening step is the H138. E143 serves as the catalytic For ring-opening step.

Belongs to the glucosamine/galactosamine-6-phosphate isomerase family. NagB subfamily.

It catalyses the reaction alpha-D-glucosamine 6-phosphate + H2O = beta-D-fructose 6-phosphate + NH4(+). Its pathway is amino-sugar metabolism; N-acetylneuraminate degradation; D-fructose 6-phosphate from N-acetylneuraminate: step 5/5. Catalyzes the reversible isomerization-deamination of glucosamine 6-phosphate (GlcN6P) to form fructose 6-phosphate (Fru6P) and ammonium ion. The polypeptide is Glucosamine-6-phosphate deaminase (Alkaliphilus oremlandii (strain OhILAs) (Clostridium oremlandii (strain OhILAs))).